The chain runs to 209 residues: uncharacterized protein (209 aa).

The protein localises to the plastid. It localises to the chloroplast. This is an uncharacterized protein from Porphyra purpurea (Red seaweed).